A 138-amino-acid polypeptide reads, in one-letter code: Ribosome-binding factor A (138 aa).

The tract at residues 117 to 138 (AEDGQHQEGPASADAKPESTEE) is disordered.

It belongs to the RbfA family. As to quaternary structure, monomer. Binds 30S ribosomal subunits, but not 50S ribosomal subunits or 70S ribosomes.

Its subcellular location is the cytoplasm. One of several proteins that assist in the late maturation steps of the functional core of the 30S ribosomal subunit. Associates with free 30S ribosomal subunits (but not with 30S subunits that are part of 70S ribosomes or polysomes). Required for efficient processing of 16S rRNA. May interact with the 5'-terminal helix region of 16S rRNA. In Pseudomonas syringae pv. syringae (strain B728a), this protein is Ribosome-binding factor A.